Consider the following 272-residue polypeptide: Tryptophan synthase alpha chain (272 aa).

Catalysis depends on proton acceptor residues glutamate 49 and glutamate 60.

Belongs to the TrpA family. In terms of assembly, tetramer of two alpha and two beta chains.

The catalysed reaction is (1S,2R)-1-C-(indol-3-yl)glycerol 3-phosphate + L-serine = D-glyceraldehyde 3-phosphate + L-tryptophan + H2O. It participates in amino-acid biosynthesis; L-tryptophan biosynthesis; L-tryptophan from chorismate: step 5/5. Its function is as follows. The alpha subunit is responsible for the aldol cleavage of indoleglycerol phosphate to indole and glyceraldehyde 3-phosphate. The chain is Tryptophan synthase alpha chain from Legionella pneumophila (strain Lens).